A 220-amino-acid polypeptide reads, in one-letter code: Probable 26S proteasome regulatory subunit p27 (220 aa).

Positions 119-196 constitute a PDZ domain; that stretch reads ARRNNDDQAI…PVLLLREGQI (78 aa).

It belongs to the proteasome subunit p27 family. As to quaternary structure, part of a transient complex containing NAS2, RPT4 and RPT5 formed during the assembly of the 26S proteasome.

Acts as a chaperone during the assembly of the 26S proteasome, specifically of the base subcomplex of the 19S regulatory complex (RC). During the base subcomplex assembly is part of a NAS2:RPT4:RPT5 module; NAS2 is released during the further base assembly process. This is Probable 26S proteasome regulatory subunit p27 (NAS2) from Saccharomyces cerevisiae (strain ATCC 204508 / S288c) (Baker's yeast).